Consider the following 138-residue polypeptide: Putative membrane protein ORF6 (138 aa).

The next 2 membrane-spanning stretches (helical) occupy residues 4–20 (LTII…HAVL) and 37–53 (VVVL…LMTI).

It is found in the membrane. The polypeptide is Putative membrane protein ORF6 (ORF6) (Ictalurid herpesvirus 1 (strain Auburn) (IcHV-1)).